The primary structure comprises 85 residues: Large ribosomal subunit protein bL27 (85 aa).

Residues 1–23 are disordered; that stretch reads MAHKKAGGSSRNGRDSESKRLGV.

The protein belongs to the bacterial ribosomal protein bL27 family.

The sequence is that of Large ribosomal subunit protein bL27 from Nitrosococcus oceani (strain ATCC 19707 / BCRC 17464 / JCM 30415 / NCIMB 11848 / C-107).